The following is a 269-amino-acid chain: MWCTWALGRVVLAVVFLVALAAGDAAPPKVHRNHGKFTAGPWKQAHATFYGGRDGSGTLDGACGYKDTSKEGYGVQTVAVSTPLFGAGAGCGACYEVKCVDSPDGCKVGAAPLVVTATNLCPPNPGQSNDNGGWCNPPREHFDLSMPAFLQIAQEKAGIVPISYRRVPCVKVGGIRYTITGNPYFNLVMVSNVGGAGDVAGLSVKGNKRVKWTPLKRNWGQEWQTSEVLTGESLTFRVMTGDHRKATSWHVLPPDWQFGVTYQATKNFN.

The signal sequence occupies residues 1 to 25 (MWCTWALGRVVLAVVFLVALAAGDA). Residues 60-174 (DGACGYKDTS…RRVPCVKVGG (115 aa)) enclose the Expansin-like EG45 domain. One can recognise an Expansin-like CBD domain in the interval 184-264 (YFNLVMVSNV…DWQFGVTYQA (81 aa)).

The protein belongs to the expansin family. Expansin A subfamily.

The protein localises to the secreted. Its subcellular location is the cell wall. It localises to the membrane. May cause loosening and extension of plant cell walls by disrupting non-covalent bonding between cellulose microfibrils and matrix glucans. No enzymatic activity has been found. May be required for rapid internodal elongation in deepwater rice during submergence. In Oryza sativa subsp. japonica (Rice), this protein is Expansin-A32 (EXPA32).